Here is a 306-residue protein sequence, read N- to C-terminus: Ribonuclease Z (306 aa).

Zn(2+) contacts are provided by histidine 63, histidine 65, aspartate 67, histidine 68, histidine 141, aspartate 211, and histidine 269. Aspartate 67 serves as the catalytic Proton acceptor.

Belongs to the RNase Z family. In terms of assembly, homodimer. Zn(2+) serves as cofactor.

The catalysed reaction is Endonucleolytic cleavage of RNA, removing extra 3' nucleotides from tRNA precursor, generating 3' termini of tRNAs. A 3'-hydroxy group is left at the tRNA terminus and a 5'-phosphoryl group is left at the trailer molecule.. Zinc phosphodiesterase, which displays some tRNA 3'-processing endonuclease activity. Probably involved in tRNA maturation, by removing a 3'-trailer from precursor tRNA. The polypeptide is Ribonuclease Z (Macrococcus caseolyticus (strain JCSC5402) (Macrococcoides caseolyticum)).